The sequence spans 247 residues: MLSSKLVACSAGRSVQRISRTFLPAMRGVATKAAAGPSRQSALSSYSIAAVTAIGVGASFYALQSRSSAIQCEPRQAWHDRLKPKEAKGDATLHKDAHTRHAPAEVQDERVEPVEETPVAIEVAVEESEEQTGQQSAYDPETGEINWDCPCLGGMAHGPCGEQFKLAFSCFVYSEAEPKGIDCVDKFKAMQDCFREHPDVYKDEIEDDEAANAQFEKEEANAKSNGLNDAAQEAVEESSGGKEGASA.

A mitochondrion-targeting transit peptide spans 1-28 (MLSSKLVACSAGRSVQRISRTFLPAMRG). The Mitochondrial matrix segment spans residues 29-45 (VATKAAAGPSRQSALSS). A helical; Signal-anchor for type II membrane protein transmembrane segment spans residues 46–63 (YSIAAVTAIGVGASFYAL). Residues 64 to 247 (QSRSSAIQCE…SSGGKEGASA (184 aa)) lie on the Mitochondrial intermembrane side of the membrane. The span at 81–96 (RLKPKEAKGDATLHKD) shows a compositional bias: basic and acidic residues. The interval 81–114 (RLKPKEAKGDATLHKDAHTRHAPAEVQDERVEPV) is disordered. 3 cysteine pairs are disulfide-bonded: Cys-149–Cys-151, Cys-160–Cys-193, and Cys-170–Cys-183. The 45-residue stretch at 157–201 (HGPCGEQFKLAFSCFVYSEAEPKGIDCVDKFKAMQDCFREHPDVY) folds into the CHCH domain. Short sequence motifs (cx9C motif) lie at residues 160–170 (CGEQFKLAFSC) and 183–193 (CVDKFKAMQDC). Residues 217–247 (KEEANAKSNGLNDAAQEAVEESSGGKEGASA) are disordered.

As to quaternary structure, monomer. Requires Cu(2+) as cofactor. Zn(2+) is required as a cofactor.

Its subcellular location is the mitochondrion inner membrane. Required for the import and folding of small cysteine-containing proteins (small Tim) in the mitochondrial intermembrane space (IMS). Forms a redox cycle with ERV1 that involves a disulfide relay system. Precursor proteins to be imported into the IMS are translocated in their reduced form into the mitochondria. The oxidized form of MIA40 forms a transient intermolecular disulfide bridge with the reduced precursor protein, resulting in oxidation of the precursor protein that now contains an intramolecular disulfide bond and is able to undergo folding in the IMS. This chain is Mitochondrial intermembrane space import and assembly protein 40 (MIA40), found in Mycosarcoma maydis (Corn smut fungus).